We begin with the raw amino-acid sequence, 237 residues long: uncharacterized protein (237 aa).

The interval 213 to 237 is disordered; that stretch reads GQGKYLKLDSNTTENKTTKQNETGG. The span at 223-237 shows a compositional bias: low complexity; the sequence is NTTENKTTKQNETGG.

This is an uncharacterized protein from Methanothermobacter thermautotrophicus (Methanobacterium thermoformicicum).